Reading from the N-terminus, the 184-residue chain is GMP synthase [glutamine-hydrolyzing] subunit A (184 aa).

The region spanning 3–184 is the Glutamine amidotransferase type-1 domain; it reads RIVVVDNHGQ…ENFRDICAGD (182 aa). The active-site Nucleophile is Cys73. Catalysis depends on residues His161 and Glu163.

In terms of assembly, heterodimer composed of a glutamine amidotransferase subunit (A) and a GMP-binding subunit (B).

It carries out the reaction XMP + L-glutamine + ATP + H2O = GMP + L-glutamate + AMP + diphosphate + 2 H(+). The protein operates within purine metabolism; GMP biosynthesis; GMP from XMP (L-Gln route): step 1/1. Functionally, catalyzes the synthesis of GMP from XMP. The polypeptide is GMP synthase [glutamine-hydrolyzing] subunit A (Natronomonas pharaonis (strain ATCC 35678 / DSM 2160 / CIP 103997 / JCM 8858 / NBRC 14720 / NCIMB 2260 / Gabara) (Halobacterium pharaonis)).